The sequence spans 453 residues: Phenylalanine-4-hydroxylase (453 aa).

Ala2 carries the post-translational modification N-acetylalanine. Position 16 is a phosphoserine (Ser16). An ACT domain is found at 36-114 (SLIFSLKEEV…TVHELSRDKE (79 aa)). Fe cation-binding residues include His285, His290, and Glu330.

Belongs to the biopterin-dependent aromatic amino acid hydroxylase family. In terms of assembly, homodimer and homotetramer. The cofactor is Fe(2+). Phosphorylation at Ser-16 increases basal activity and facilitates activation by the substrate phenylalanine.

It carries out the reaction (6R)-L-erythro-5,6,7,8-tetrahydrobiopterin + L-phenylalanine + O2 = (4aS,6R)-4a-hydroxy-L-erythro-5,6,7,8-tetrahydrobiopterin + L-tyrosine. It participates in amino-acid degradation; L-phenylalanine degradation; acetoacetate and fumarate from L-phenylalanine: step 1/6. Its activity is regulated as follows. N-terminal region of PAH is thought to contain allosteric binding sites for phenylalanine and to constitute an 'inhibitory' domain that regulates the activity of a catalytic domain in the C-terminal portion of the molecule. Catalyzes the hydroxylation of L-phenylalanine to L-tyrosine. The polypeptide is Phenylalanine-4-hydroxylase (Pah) (Mus musculus (Mouse)).